Here is a 403-residue protein sequence, read N- to C-terminus: Putative queuine tRNA-ribosyltransferase (403 aa).

Residue Asp-91 is the Proton acceptor of the active site. Substrate-binding positions include 91-95 (DSGGF), Asp-177, Gln-218, and Gly-245. Residues 275 to 281 (GIGAIED) are RNA binding. Asp-294 serves as the catalytic Nucleophile. The RNA binding; important for wobble base 34 recognition stretch occupies residues 299–303 (ARWAR). Zn(2+)-binding residues include Cys-341, Cys-343, Cys-346, and His-372.

This sequence belongs to the queuine tRNA-ribosyltransferase family. As to quaternary structure, homodimer. Within each dimer, one monomer is responsible for RNA recognition and catalysis, while the other monomer binds to the replacement base PreQ1. It depends on Zn(2+) as a cofactor.

It carries out the reaction 7-aminomethyl-7-carbaguanine + guanosine(34) in tRNA = 7-aminomethyl-7-carbaguanosine(34) in tRNA + guanine. Catalyzes the base-exchange of a guanine (G) residue with the queuine precursor 7-aminomethyl-7-deazaguanine (PreQ1) at position 34 (anticodon wobble position) in tRNAs with GU(N) anticodons (tRNA-Asp, -Asn, -His and -Tyr). Catalysis occurs through a double-displacement mechanism. The nucleophile active site attacks the C1' of nucleotide 34 to detach the guanine base from the RNA, forming a covalent enzyme-RNA intermediate. The proton acceptor active site deprotonates the incoming PreQ1, allowing a nucleophilic attack on the C1' of the ribose to form the product. After dissociation, two additional enzymatic reactions on the tRNA convert PreQ1 to queuine (Q), resulting in the hypermodified nucleoside queuosine (7-(((4,5-cis-dihydroxy-2-cyclopenten-1-yl)amino)methyl)-7-deazaguanosine). This chain is Putative queuine tRNA-ribosyltransferase, found in Archaeoglobus fulgidus (strain ATCC 49558 / DSM 4304 / JCM 9628 / NBRC 100126 / VC-16).